Reading from the N-terminus, the 564-residue chain is Chaperonin GroEL 2 (564 aa).

ATP-binding positions include 29–32 (TIGP), 86–90 (DGTTT), Gly413, and Asp493. Residues 521 to 541 (DKPEPPAPAGDGGGDPMGGMG) form a disordered region. Residues 530-541 (GDGGGDPMGGMG) are compositionally biased toward gly residues.

This sequence belongs to the chaperonin (HSP60) family. Forms a cylinder of 14 subunits composed of two heptameric rings stacked back-to-back. Interacts with the co-chaperonin GroES.

It localises to the cytoplasm. The catalysed reaction is ATP + H2O + a folded polypeptide = ADP + phosphate + an unfolded polypeptide.. Its function is as follows. Together with its co-chaperonin GroES, plays an essential role in assisting protein folding. The GroEL-GroES system forms a nano-cage that allows encapsulation of the non-native substrate proteins and provides a physical environment optimized to promote and accelerate protein folding. The chain is Chaperonin GroEL 2 from Prochlorococcus marinus (strain MIT 9303).